Consider the following 168-residue polypeptide: Transmembrane protein 31 (168 aa).

Basic and acidic residues predominate over residues 1–11 (MRLTEKSEGEQ). Residues 1–63 (MRLTEKSEGE…LPSRRTPTTS (63 aa)) form a disordered region. 2 stretches are compositionally biased toward polar residues: residues 13–22 (LKPNNSNAPN) and 35–48 (HTPA…ADTQ). The segment covering 49–63 (PSRCRLPSRRTPTTS) has biased composition (low complexity). 2 helical membrane passes run 119–139 (IGLP…YKFF) and 148–168 (FFIL…LIFF).

Its subcellular location is the membrane. The chain is Transmembrane protein 31 (TMEM31) from Homo sapiens (Human).